We begin with the raw amino-acid sequence, 421 residues long: N-succinylarginine dihydrolase (421 aa).

Substrate contacts are provided by residues 19 to 28, Asn105, and 132 to 133; these read AGLSLGNLAS and HR. Glu167 is an active-site residue. Arg199 is a substrate binding site. His235 is an active-site residue. The substrate site is built by Asp237 and Asn346. Cys352 (nucleophile) is an active-site residue.

The protein belongs to the succinylarginine dihydrolase family. Homodimer.

It carries out the reaction N(2)-succinyl-L-arginine + 2 H2O + 2 H(+) = N(2)-succinyl-L-ornithine + 2 NH4(+) + CO2. It participates in amino-acid degradation; L-arginine degradation via AST pathway; L-glutamate and succinate from L-arginine: step 2/5. Its function is as follows. Catalyzes the hydrolysis of N(2)-succinylarginine into N(2)-succinylornithine, ammonia and CO(2). This Novosphingobium aromaticivorans (strain ATCC 700278 / DSM 12444 / CCUG 56034 / CIP 105152 / NBRC 16084 / F199) protein is N-succinylarginine dihydrolase.